The chain runs to 253 residues: Probable transcriptional regulatory protein Tlet_1011 (253 aa).

The protein belongs to the TACO1 family.

Its subcellular location is the cytoplasm. In Pseudothermotoga lettingae (strain ATCC BAA-301 / DSM 14385 / NBRC 107922 / TMO) (Thermotoga lettingae), this protein is Probable transcriptional regulatory protein Tlet_1011.